A 548-amino-acid polypeptide reads, in one-letter code: Natural resistance-associated macrophage protein 1 (548 aa).

The disordered stretch occupies residues 1-38; it reads MSGDTGPPKQGGTRYGSISSPPSPEPQQAPPGGTYLSE. Residues 1-55 lie on the Cytoplasmic side of the membrane; that stretch reads MSGDTGPPKQGGTRYGSISSPPSPEPQQAPPGGTYLSEKIPIPDTESGTFSLRKL. Residues 56–73 traverse the membrane as a helical segment; sequence WAFTGPGFLMSIAFLDPG. Residues 74-82 lie on the Extracellular side of the membrane; sequence NIESDLQAG. Residues 83 to 102 form a helical membrane-spanning segment; sequence AVAGFKLLWVLLWATVLGLL. The Cytoplasmic segment spans residues 103-139; it reads CQRLAARLGVVTGKDLGEVCHLYYPKVPRILLWLTIE. A helical membrane pass occupies residues 140 to 160; that stretch reads LAIVGSDMQEVIGTAIAFSLL. Residues 161 to 164 lie on the Extracellular side of the membrane; that stretch reads SAGR. Residues 165 to 184 traverse the membrane as a helical segment; the sequence is IPLWGGVLITIVDAFFFLFL. Over 185 to 193 the chain is Cytoplasmic; it reads DNYGLRKLE. The helical transmembrane segment at 194 to 214 threads the bilayer; sequence AFFGFLITIMALTFGYEYVVA. At 215–237 the chain is on the extracellular side; that stretch reads QPAQGALLQGLFLPSCPGCGQPE. Residues 238–256 traverse the membrane as a helical segment; sequence LLQAVGIIGAIIMPHNIYL. At 257 to 284 the chain is on the cytoplasmic side; the sequence is HSSLVKSREVDRSRRADIREANMYFLIE. A helical transmembrane segment spans residues 285–304; sequence ATIALSVSFLINLFVMAVFG. The Extracellular portion of the chain corresponds to 305 to 346; it reads QAFYKQTNQAAFNICANSSLQDYAPIFPRNNLTVAVDIYQGG. Asparagine 321 and asparagine 335 each carry an N-linked (GlcNAc...) asparagine glycan. The helical transmembrane segment at 347–366 threads the bilayer; it reads VILGCLFGPAALYIWAVGLL. Over 367–397 the chain is Cytoplasmic; it reads AAGQSSTMTGTYAGQFVMEGFLKLRWSRFAR. A helical membrane pass occupies residues 398–415; it reads VLLTRSCAILPTVLLAVF. Topologically, residues 416-426 are extracellular; the sequence is RDLRDLSGLND. The chain crosses the membrane as a helical span at residues 427-447; the sequence is LLNVLQSLLLPFAVLPILTFT. Residues 448-463 are Cytoplasmic-facing; the sequence is SMPALMREFANGLVSK. A helical membrane pass occupies residues 464 to 485; it reads VITSSIMVLVCAVNLYFVISYV. Residues 486–493 are Extracellular-facing; that stretch reads PSLPHPAY. A helical transmembrane segment spans residues 494-513; the sequence is FSLVALLAAAYLGLTTYLVW. Residues 514–548 lie on the Cytoplasmic side of the membrane; that stretch reads TCLITQGATLLAHSSHQRFLYGLPEEDQEKGRTSG.

It belongs to the NRAMP family.

It is found in the late endosome membrane. Its subcellular location is the lysosome membrane. The enzyme catalyses Zn(2+)(in) + H(+)(out) = Zn(2+)(out) + H(+)(in). It catalyses the reaction Fe(2+)(in) + H(+)(out) = Fe(2+)(out) + H(+)(in). The catalysed reaction is Mn(2+)(in) + H(+)(out) = Mn(2+)(out) + H(+)(in). Macrophage-specific antiporter that fluxes metal ions in either direction against a proton gradient. Localized to late endosomal lysosomal membranes, delivers bivalent cations from the cytosol into these acidic compartments where they may directly affect antimicrobial activity. Involved in iron metabolism and host natural resistance to infection with intracellular parasites. Pathogen resistance involves sequestration of Fe(2+) and Mn(2+), cofactors of both prokaryotic and eukaryotic catalases and superoxide dismutases, not only to protect the macrophage against its own generation of reactive oxygen species, but to deny the cations to the pathogen for synthesis of its protective enzymes. The sequence is that of Natural resistance-associated macrophage protein 1 (SLC11A1) from Bison bison (American bison).